A 396-amino-acid polypeptide reads, in one-letter code: Cytochrome b (396 aa).

Transmembrane regions (helical) follow at residues 32-52 (FGSL…TLAM), 76-98 (WLLR…LHIG), 113-133 (LWSI…IGYV), and 179-199 (FFSL…MHLL). Residues histidine 82 and histidine 96 each coordinate heme b. Heme b-binding residues include histidine 183 and histidine 197. A ubiquinone is bound at residue histidine 202. Transmembrane regions (helical) follow at residues 225-245 (FTSK…IFVF), 289-309 (LGGV…ALIH), 321-341 (LLNL…WVGA), and 348-368 (YILI…ILMI).

The protein belongs to the cytochrome b family. Fungal cytochrome b-c1 complex contains 10 subunits; 3 respiratory subunits, 2 core proteins and 5 low-molecular weight proteins. Cytochrome b-c1 complex is a homodimer. Heme b is required as a cofactor.

The protein localises to the mitochondrion inner membrane. Component of the ubiquinol-cytochrome c reductase complex (complex III or cytochrome b-c1 complex) that is part of the mitochondrial respiratory chain. The b-c1 complex mediates electron transfer from ubiquinol to cytochrome c. Contributes to the generation of a proton gradient across the mitochondrial membrane that is then used for ATP synthesis. In Spizellomyces punctatus, this protein is Cytochrome b (cob).